The primary structure comprises 334 residues: L-lactate dehydrogenase B chain (334 aa).

Residues 30–58 (GQVG…LEDK) and R100 each bind NAD(+). Substrate is bound by residues R107, N139, and R170. An NAD(+)-binding site is contributed by N139. Catalysis depends on H194, which acts as the Proton acceptor. T249 serves as a coordination point for substrate.

The protein belongs to the LDH/MDH superfamily. LDH family. In terms of assembly, homotetramer.

It localises to the cytoplasm. The catalysed reaction is (S)-lactate + NAD(+) = pyruvate + NADH + H(+). The protein operates within fermentation; pyruvate fermentation to lactate; (S)-lactate from pyruvate: step 1/1. In terms of biological role, interconverts simultaneously and stereospecifically pyruvate and lactate with concomitant interconversion of NADH and NAD(+). This chain is L-lactate dehydrogenase B chain (ldhb), found in Squalus acanthias (Spiny dogfish).